The following is a 60-amino-acid chain: Cytotoxin 2 (60 aa).

Disulfide bonds link C3–C21, C14–C38, C42–C53, and C54–C59.

This sequence belongs to the three-finger toxin family. Short-chain subfamily. Type IA cytotoxin sub-subfamily. Monomer in solution; Homodimer and oligomer in the presence of negatively charged lipids forming a pore with a size ranging between 20 and 30 Angstroms. As to expression, expressed by the venom gland.

Its subcellular location is the secreted. The protein localises to the target cell membrane. Its function is as follows. This three-finger cytotoxin is a basic protein that interacts and penetrates into the cell membrane, with the tips of all the three loops. Cytotoxins which have a Pro-30 (P-type) interacts with membrane stronger that those which have a 'Ser-28' (S-type). CTII interacts with membrane stronger than CTI. The polypeptide is Cytotoxin 2 (Naja oxiana (Central Asian cobra)).